Here is a 284-residue protein sequence, read N- to C-terminus: 3-methyl-2-oxobutanoate hydroxymethyltransferase 2 (284 aa).

Mg(2+) contacts are provided by Asp-49 and Asp-88. 3-methyl-2-oxobutanoate contacts are provided by residues 49-50 (DS), Asp-88, and Lys-118. Position 120 (Glu-120) interacts with Mg(2+). The active-site Proton acceptor is Glu-187.

Belongs to the PanB family. In terms of assembly, homodecamer; pentamer of dimers. Mg(2+) is required as a cofactor.

It localises to the cytoplasm. It catalyses the reaction 3-methyl-2-oxobutanoate + (6R)-5,10-methylene-5,6,7,8-tetrahydrofolate + H2O = 2-dehydropantoate + (6S)-5,6,7,8-tetrahydrofolate. The protein operates within cofactor biosynthesis; (R)-pantothenate biosynthesis; (R)-pantoate from 3-methyl-2-oxobutanoate: step 1/2. In terms of biological role, catalyzes the reversible reaction in which hydroxymethyl group from 5,10-methylenetetrahydrofolate is transferred onto alpha-ketoisovalerate to form ketopantoate. This is 3-methyl-2-oxobutanoate hydroxymethyltransferase 2 from Burkholderia cenocepacia (strain HI2424).